The following is a 518-amino-acid chain: Protein nucleotidyltransferase YdiU (518 aa).

A compositionally biased stretch (basic and acidic residues) spans 1–10 (MTHLHFDNRL). Positions 1–25 (MTHLHFDNRLRQQLPGDPEEGARRR) are disordered. Glycine 100, glycine 102, arginine 103, lysine 123, aspartate 135, glycine 136, arginine 193, and arginine 200 together coordinate ATP. The active-site Proton acceptor is the aspartate 270. Mg(2+) is bound by residues asparagine 271 and aspartate 280. Aspartate 280 serves as a coordination point for ATP.

The protein belongs to the SELO family. Mg(2+) serves as cofactor. Mn(2+) is required as a cofactor.

The catalysed reaction is L-seryl-[protein] + ATP = 3-O-(5'-adenylyl)-L-seryl-[protein] + diphosphate. It catalyses the reaction L-threonyl-[protein] + ATP = 3-O-(5'-adenylyl)-L-threonyl-[protein] + diphosphate. The enzyme catalyses L-tyrosyl-[protein] + ATP = O-(5'-adenylyl)-L-tyrosyl-[protein] + diphosphate. It carries out the reaction L-histidyl-[protein] + UTP = N(tele)-(5'-uridylyl)-L-histidyl-[protein] + diphosphate. The catalysed reaction is L-seryl-[protein] + UTP = O-(5'-uridylyl)-L-seryl-[protein] + diphosphate. It catalyses the reaction L-tyrosyl-[protein] + UTP = O-(5'-uridylyl)-L-tyrosyl-[protein] + diphosphate. Functionally, nucleotidyltransferase involved in the post-translational modification of proteins. It can catalyze the addition of adenosine monophosphate (AMP) or uridine monophosphate (UMP) to a protein, resulting in modifications known as AMPylation and UMPylation. This chain is Protein nucleotidyltransferase YdiU, found in Xanthomonas euvesicatoria pv. vesicatoria (strain 85-10) (Xanthomonas campestris pv. vesicatoria).